We begin with the raw amino-acid sequence, 523 residues long: Sorting nexin-2 (523 aa).

The disordered stretch occupies residues 1–104; it reads MAAEREPPPL…EPSPAVTPVT (104 aa). Composition is skewed to low complexity over residues 27–48 and 93–104; these read LFTS…TSLP and SSEPSPAVTPVT. Ser-97 bears the Phosphoserine mark. Residues Thr-101 and Thr-104 each carry the phosphothreonine modification. Residues Ser-117 and Ser-119 each carry the phosphoserine modification. The PX domain occupies 140 to 269; that stretch reads FDIEIGVSDP…QFLESSELPR (130 aa). Positions 183, 185, 211, and 235 each coordinate a 1,2-diacyl-sn-glycero-3-phospho-(1D-myo-inositol-3-phosphate). At Ser-185 the chain carries Phosphoserine. The tract at residues 260–523 is interaction with RhoG; it reads QFLESSELPR…AFLPEAKAIA (264 aa). Ser-277 carries the phosphoserine modification. The tract at residues 278 to 295 is membrane-binding amphipathic helix; it reads GAGILRMVNKAADAVNKM. Residues 299 to 523 form the BAR domain; it reads MNESDAWFEE…AFLPEAKAIA (225 aa). Residue Lys-473 is modified to N6-acetyllysine.

It belongs to the sorting nexin family. In terms of assembly, predominantly forms heterodimers with BAR domain-containing sorting nexins SNX5, SNX6 and SNX32; can self-associate to form homodimers. The heterodimers are proposed to self-assemble into helical arrays on the membrane to stabilize and expand local membrane curvature underlying endosomal tubule formation. Thought to be a component of the originally described retromer complex (also called SNX-BAR retromer) which is a pentamer containing the heterotrimeric retromer cargo-selective complex (CSC), also described as vacuolar protein sorting subcomplex (VPS), and a heterodimeric membrane-deforming subcomplex formed between SNX1 or SNX2 and SNX5 or SNX6 (also called SNX-BAR subcomplex); the respective CSC and SNX-BAR subcomplexes associate with low affinity. Interacts with SNX5, SNX6, SNX32, VPS26A, VPS29, VPS35, FNBP1, KALRN, RHOG (GDP-bound form).

The protein resides in the early endosome membrane. It localises to the cell projection. The protein localises to the lamellipodium. Its function is as follows. Involved in several stages of intracellular trafficking. Interacts with membranes containing phosphatidylinositol 3-phosphate (PtdIns(3P)) or phosphatidylinositol 3,5-bisphosphate (PtdIns(3,5)P2). Acts in part as component of the retromer membrane-deforming SNX-BAR subcomplex. The SNX-BAR retromer mediates retrograde transport of cargo proteins from endosomes to the trans-Golgi network (TGN) and is involved in endosome-to-plasma membrane transport for cargo protein recycling. The SNX-BAR subcomplex functions to deform the donor membrane into a tubular profile called endosome-to-TGN transport carrier (ETC). Can sense membrane curvature and has in vitro vesicle-to-membrane remodeling activity. Required for retrograde endosome-to-TGN transport of TGN38. Promotes KALRN- and RHOG-dependent but retromer-independent membrane remodeling such as lamellipodium formation; the function is dependent on GEF activity of KALRN. The protein is Sorting nexin-2 (SNX2) of Pongo abelii (Sumatran orangutan).